The sequence spans 447 residues: Beclin-1 (447 aa).

Low complexity predominate over residues 44–53 (PPLTAAPARP). The disordered stretch occupies residues 44 to 71 (PPLTAAPARPGDAQEESALSEEAFTEGR). The BH3 motif lies at 105-124 (TMENLSRRLKVTGDLFDIMS). Residues 139–266 (DTLLDQLDTQ…QLDKLKKTNV (128 aa)) are a coiled coil. Residues 242–447 (DELKSVENQM…AWVSSQFYNK (206 aa)) form an evolutionary conserved domain (ECD) region. The tract at residues 422–447 (WTKALKFMLTNLKWGLAWVSSQFYNK) is required for membrane-association.

It belongs to the beclin family. As to quaternary structure, component of the PI3K (PI3KC3/PI3K-III/class III phosphatidylinositol 3-kinase) complex. Post-translationally, may be proteolytically processed by caspases; the C-terminal fragment(s) may induce apoptosis.

The protein localises to the cytoplasm. Its subcellular location is the golgi apparatus. The protein resides in the trans-Golgi network membrane. It is found in the endosome membrane. It localises to the endoplasmic reticulum membrane. The protein localises to the mitochondrion membrane. Its subcellular location is the cytoplasmic vesicle. The protein resides in the autophagosome. Its function is as follows. Plays a central role in autophagy. Acts as core subunit of different PI3K complex forms that mediate formation of phosphatidylinositol 3-phosphate and are believed to play a role in multiple membrane trafficking pathways such as initiation of autophagosomes, maturation of autophagosomes and endocytosis. Involved in regulation of degradative endocytic trafficking and required for the abscission step in cytokinesis, probably in the context of PI3KC3-C2. In Gallus gallus (Chicken), this protein is Beclin-1 (BECN1).